Consider the following 518-residue polypeptide: MAVRLRRVKRANPYDLYRTCATGDCPQDVKDRFEHNTIADKILKWGSAGVFLGGLGIGSTQARPGLGTYSPLGRGGVTGRIPVRGPGSTRPLGRPFSSGPIDTIGAGVRTSVETSVTVPDVVAVLPESPAVITPDSMPVDPGVGGLDISAEIIEEPSLTFVEPHGPEDVAVLDVNPAEHDRSVYLSSSTTHHNPSFQGQVTVYTDIGETSETENLLISGSNIGSSRGEEIQMQLFSGPKTSTPETDAVTKVRGRANWFSKRYYTQTSVRDPTFIQEPQTYFYGFENPAYEPDPFEDSFDVQLASPSEPVQPELRDITHVSAARTFRGESGRVGISRLGQKSSIQTRSGVTVGGRVHFRYSLSTIEDAIEDAGEIELQVTNGSQGPSGSLQHTAETILSEGHDAYVDVDMDSVGSLYSDIDLIDEHSETPHGILVFHDEAETDVVPVIDVSYVRKPLSTIPGSDLWPTNINIQNGPVDVDLQDSILPGIIITDSGVDGTYFLNTYLHPSLHKRKKRRFS.

The short motif at 2–11 (AVRLRRVKRA) is the Nuclear localization signal element. Cysteines 20 and 25 form a disulfide. Residues 68-100 (TYSPLGRGGVTGRIPVRGPGSTRPLGRPFSSGP) are disordered. Positions 511 to 517 (KRKKRRF) match the Nuclear localization signal motif.

This sequence belongs to the papillomaviridae L2 protein family. As to quaternary structure, interacts with major capsid protein L1. Interacts with E2; this interaction inhibits E2 transcriptional activity but not the DNA replication function E2. Interacts with host GADD45GIP1. Interacts with host HSPA8; this interaction is required for L2 nuclear translocation. Interacts with host importins KPNB2 and KPNB3. Forms a complex with importin alpha2-beta1 heterodimers via interaction with the importin alpha2 adapter. Interacts with host DYNLT1; this interaction is essential for virus intracellular transport during entry. Interacts (via C-terminus) with host retromer subunits VPS35 and VPS29. In terms of processing, highly phosphorylated.

It localises to the virion. The protein localises to the host nucleus. The protein resides in the host early endosome. It is found in the host Golgi apparatus. Functionally, minor protein of the capsid that localizes along the inner surface of the virion, within the central cavities beneath the L1 pentamers. Plays a role in capsid stabilization through interaction with the major capsid protein L1. Once the virion enters the host cell, L2 escorts the genomic DNA into the nucleus by promoting escape from the endosomal compartments and traffic through the host Golgi network. Mechanistically, the C-terminus of L2 possesses a cell-penetrating peptide that protudes from the host endosome, interacts with host cytoplasmic retromer cargo and thereby mediates the capsid delivery to the host trans-Golgi network. Plays a role through its interaction with host dynein in the intracellular microtubule-dependent transport of viral capsid toward the nucleus. Mediates the viral genome import into the nucleus through binding to host importins. Once within the nucleus, L2 localizes viral genomes to host PML bodies in order to activate early gene expression for establishment of infection. Later on, promotes late gene expression by interacting with the viral E2 protein and by inhibiting its transcriptional activation functions. During virion assembly, encapsidates the genome by direct interaction with the viral DNA. This Bos taurus (Bovine) protein is Minor capsid protein L2.